A 592-amino-acid polypeptide reads, in one-letter code: Glutamine--fructose-6-phosphate aminotransferase [isomerizing] (592 aa).

Cys-2 acts as the Nucleophile; for GATase activity in catalysis. The 216-residue stretch at 2 to 217 folds into the Glutamine amidotransferase type-2 domain; sequence CGIVGYVGRD…DGEIADLTPD (216 aa). SIS domains are found at residues 277–416 and 441–582; these read IPFK…EREN and VAEK…VDQP. The For Fru-6P isomerization activity role is filled by Lys-587.

In terms of assembly, homodimer.

The protein localises to the cytoplasm. It carries out the reaction D-fructose 6-phosphate + L-glutamine = D-glucosamine 6-phosphate + L-glutamate. Catalyzes the first step in hexosamine metabolism, converting fructose-6P into glucosamine-6P using glutamine as a nitrogen source. In Aquifex aeolicus (strain VF5), this protein is Glutamine--fructose-6-phosphate aminotransferase [isomerizing].